Consider the following 436-residue polypeptide: Chromosomal replication initiator protein DnaA (436 aa).

Residues 1–80 are domain I, interacts with DnaA modulators; sequence MSHEAVWQHV…QAPRFELRVV (80 aa). Residues 80–100 are domain II; the sequence is VPGVVVQEDIFQAAPAEAPRP. A domain III, AAA+ region region spans residues 101-317; it reads KLNPKYTFEN…GALMRAIAFA (217 aa). ATP-binding residues include G145, G147, K148, and T149. Positions 318–436 are domain IV, binds dsDNA; that stretch reads SLNGVELTRA…LLRTLREACT (119 aa).

This sequence belongs to the DnaA family. As to quaternary structure, oligomerizes as a right-handed, spiral filament on DNA at oriC.

The protein localises to the cytoplasm. Functionally, plays an essential role in the initiation and regulation of chromosomal replication. ATP-DnaA binds to the origin of replication (oriC) to initiate formation of the DNA replication initiation complex once per cell cycle. Binds the DnaA box (a 9 base pair repeat at the origin) and separates the double-stranded (ds)DNA. Forms a right-handed helical filament on oriC DNA; dsDNA binds to the exterior of the filament while single-stranded (ss)DNA is stabiized in the filament's interior. The ATP-DnaA-oriC complex binds and stabilizes one strand of the AT-rich DNA unwinding element (DUE), permitting loading of DNA polymerase. After initiation quickly degrades to an ADP-DnaA complex that is not apt for DNA replication. Binds acidic phospholipids. In Thermus thermophilus (strain ATCC BAA-163 / DSM 7039 / HB27), this protein is Chromosomal replication initiator protein DnaA.